A 305-amino-acid chain; its full sequence is Mitochondrial brown fat uncoupling protein 1 (305 aa).

Over 1–10 (MVGHAATDVP) the chain is Mitochondrial intermembrane. The helical transmembrane segment at 11–32 (PTMAVKIFSAGVAACVADIITF) threads the bilayer. 3 Solcar repeats span residues 11-102 (PTMA…VQEF), 109-199 (ASLG…MKEA), and 208-293 (DDVP…LKRE). Over 33 to 73 (PLDTAKVRLQIQGECLTSSAFRYKGVLGTIITLAKTEGPVK) the chain is Mitochondrial matrix. Lys-56 contributes to the fatty acid 16:0 binding site. Residues 74 to 96 (LYSGLPAGLQRQISFASLRIGLY) form a helical membrane-spanning segment. Topologically, residues 97–114 (DTVQEFFTTGKEASLGSK) are mitochondrial intermembrane. The helical transmembrane segment at 115-131 (ISAGLTTGGVAVFIGQP) threads the bilayer. Topologically, residues 132 to 176 (TEVVKVRLQAQSHLHGPKPRYTGTYNAYRIIATTEGLTGLWKGTT) are mitochondrial matrix. A helical transmembrane segment spans residues 177-193 (PNLTRNVIINCTELVTY). Residues 194–210 (DLMKEALVKNKLLADDV) are Mitochondrial intermembrane-facing. The helical transmembrane segment at 211–230 (PCHFVSAVVAGFCTTVLSSP) threads the bilayer. Over 231–264 (VDVVKTRFVNSSPGQYTSVPNCAMMMLTREGPSA) the chain is Mitochondrial matrix. Residue Cys-252 is modified to Cysteine sulfenic acid (-SOH). Residues 265-287 (FFKGFVPSFLRLGSWNIIMFVCF) traverse the membrane as a helical segment. Lys-267 contacts fatty acid 16:0. The Mitochondrial intermembrane portion of the chain corresponds to 288-305 (EQLKRELMKSRQAMDCAT).

Belongs to the mitochondrial carrier (TC 2.A.29) family. In terms of assembly, most probably functions as a monomer. Binds one purine nucleotide per monomer. However, has also been suggested to function as a homodimer or a homotetramer. Tightly associates with cardiolipin in the mitochondrion inner membrane; may stabilize and regulate its activity. May undergo sulfenylation upon cold exposure. May increase the sensitivity of UCP1 thermogenic function to the activation by noradrenaline probably through structural effects. Post-translationally, may undergo ubiquitin-mediated proteasomal degradation.

It is found in the mitochondrion inner membrane. The catalysed reaction is H(+)(in) = H(+)(out). With respect to regulation, has no constitutive proton transporter activity and has to be activated by long-chain fatty acids/LCFAs. Inhibited by purine nucleotides. Both purine nucleotides and LCFAs bind the cytosolic side of the transporter and directly compete to activate or inhibit it. Activated by noradrenaline and reactive oxygen species. Despite lacking canonical translational encoding for selenocysteine, a small pool of the protein has been observed to selectively incorporate selenocysteine at 'Cys-252'. Selenocysteine-modified protein is highly sensitive to redox modification and may constitute a pool of protein highly sensitive to activation by elevated levels of reactive oxygen species (ROS). In terms of biological role, mitochondrial protein responsible for thermogenic respiration, a specialized capacity of brown adipose tissue and beige fat that participates in non-shivering adaptive thermogenesis to temperature and diet variations and more generally to the regulation of energy balance. Functions as a long-chain fatty acid/LCFA and proton symporter, simultaneously transporting one LCFA and one proton through the inner mitochondrial membrane. However, LCFAs remaining associated with the transporter via their hydrophobic tails, it results in an apparent transport of protons activated by LCFAs. Thereby, dissipates the mitochondrial proton gradient and converts the energy of substrate oxydation into heat instead of ATP. Regulates the production of reactive oxygen species/ROS by mitochondria. This Ovis aries (Sheep) protein is Mitochondrial brown fat uncoupling protein 1.